The primary structure comprises 101 residues: MVSLLCCGPKLAACGIVLSVWGVIMLVLLGVFFNVHSAVLIEDVPFTEADMFEDPNPPAKMYRLYEQVSYNCFIAAAIYIVLGGFSFCQVRLNKRKEYMVR.

2 helical membrane passes run 13-33 (ACGI…GVFF) and 68-88 (VSYN…FSFC).

Belongs to the RNase K family.

It is found in the membrane. Its function is as follows. Endoribonuclease which preferentially cleaves ApU and ApG phosphodiester bonds. The protein is Ribonuclease kappa-B (rnasek-b) of Xenopus laevis (African clawed frog).